We begin with the raw amino-acid sequence, 142 residues long: ATP synthase epsilon chain (142 aa).

This sequence belongs to the ATPase epsilon chain family. As to quaternary structure, F-type ATPases have 2 components, CF(1) - the catalytic core - and CF(0) - the membrane proton channel. CF(1) has five subunits: alpha(3), beta(3), gamma(1), delta(1), epsilon(1). CF(0) has three main subunits: a, b and c.

It localises to the cell inner membrane. Functionally, produces ATP from ADP in the presence of a proton gradient across the membrane. The chain is ATP synthase epsilon chain from Shewanella putrefaciens (strain CN-32 / ATCC BAA-453).